We begin with the raw amino-acid sequence, 233 residues long: Bcl-2-like protein 1 (233 aa).

A BH4 motif is present at residues 4-24; that stretch reads SNRELVVDFLSYKLSQKGYSW. The tract at residues 27–73 is disordered; the sequence is FSDVEENRTEAPEETEAERETPSAINGNPSWHLADSPAVNGATGHSS. Position 49 is a phosphoserine; by PLK3 (serine 49). At serine 62 the chain carries Phosphoserine; by CDK1. Positions 86–100 match the BH3 motif; sequence VKQALREAGDEFELR. The BH1 signature appears at 129–148; the sequence is ELFRDGVNWGRIVAFFSFGG. Positions 180–195 match the BH2 motif; that stretch reads PWIQENGGWDTFVDLY. The helical transmembrane segment at 210-226 threads the bilayer; sequence FNRWFLTGMTVAGVVLL.

Belongs to the Bcl-2 family. Homodimer. Interacts with BAD. Interacts with PGAM5. Interacts with HEBP2. Interacts with p53/TP53 and BBC3; interaction with BBC3 disrupts the interaction with p53/TP53. Interacts with ATP5F1A and ATP5F1B; the interactions mediate the association of isoform Bcl-X(L) with the mitochondrial membrane ATP synthase F(1)F(0) ATP synthase. Interacts with VDAC1. Interacts with BCL2L11 (via BH3). Interacts with RNF183. Interacts with GIMAP3/IAN4 and GIMAP5/IAN5. Interacts with GIMAP5 and HSPA8/HSC70; the interaction between HSPA8 and BCL2L1 is impaired in the absence of GIMAP5. Interacts with isoform 4 of CLU; this interaction releases and activates BAX and promotes cell death. In terms of assembly, forms heterodimers with BAX, BAK or BCL2; heterodimerization with BAX does not seem to be required for anti-apoptotic activity. Interacts with isoform 1 of SIVA1; the interaction inhibits the anti-apoptotic activity. Interacts with IKZF3. Interacts with RTL10/BOP. Interacts with DNM1L and CLTA; DNM1L and BCL2L1 isoform BCL-X(L) may form a complex in synaptic vesicles that also contains clathrin and MFF. Interacts (via the loop between motifs BH4 and BH3) with NLRP1 (via LRR repeats), but not with NLRP2, NLRP3, NLRP4, PYCARD, nor MEFV. Interacts with BECN1. Post-translationally, proteolytically cleaved by caspases during apoptosis. The cleaved protein, lacking the BH4 motif, has pro-apoptotic activity. In terms of processing, phosphorylated on Ser-62 by CDK1. This phosphorylation is partial in normal mitotic cells, but complete in G2-arrested cells upon DNA-damage, thus promoting subsequent apoptosis probably by triggering caspases-mediated proteolysis. Phosphorylated by PLK3, leading to regulate the G2 checkpoint and progression to cytokinesis during mitosis. Phosphorylation at Ser-49 appears during the S phase and G2, disappears rapidly in early mitosis during prometaphase, metaphase and early anaphase, and re-appears during telophase and cytokinesis. Ubiquitinated by RNF183 during prolonged ER stress, leading to degradation by the proteosome. In terms of tissue distribution, widely expressed, with highest levels in the brain, thymus, bone marrow, and kidney. Bcl-X(L) and Bcl-X(delta-TM) expression is enhanced in B- and T-lymphocytes that have been activated.

It is found in the mitochondrion membrane. The protein localises to the nucleus membrane. It localises to the cytoplasm. Its subcellular location is the cytoskeleton. The protein resides in the microtubule organizing center. It is found in the centrosome. The protein localises to the mitochondrion inner membrane. It localises to the mitochondrion outer membrane. Its subcellular location is the mitochondrion matrix. The protein resides in the cytoplasmic vesicle. It is found in the secretory vesicle. The protein localises to the synaptic vesicle membrane. It localises to the cytosol. Potent inhibitor of cell death. Inhibits activation of caspases. Appears to regulate cell death by blocking the voltage-dependent anion channel (VDAC) by binding to it and preventing the release of the caspase activator, CYC1, from the mitochondrial membrane. Also acts as a regulator of G2 checkpoint and progression to cytokinesis during mitosis. Its function is as follows. Isoform Bcl-X(L) also regulates presynaptic plasticity, including neurotransmitter release and recovery, number of axonal mitochondria as well as size and number of synaptic vesicle clusters. During synaptic stimulation, increases ATP availability from mitochondria through regulation of mitochondrial membrane ATP synthase F(1)F(0) activity and regulates endocytic vesicle retrieval in hippocampal neurons through association with DMN1L and stimulation of its GTPase activity in synaptic vesicles. May attenuate inflammation impairing NLRP1-inflammasome activation, hence CASP1 activation and IL1B release. Functionally, isoform Bcl-X(S) promotes apoptosis. The sequence is that of Bcl-2-like protein 1 (Bcl2l1) from Mus musculus (Mouse).